Consider the following 89-residue polypeptide: MAVTKDQTSQIVKKFKTSDLDTGSSEVQIALLTAKINDLTNHFAKHKKDHHGRRGLVTMVNKRRKLLDYLHRKDVKKYQDLIKALDIRK.

Belongs to the universal ribosomal protein uS15 family. Part of the 30S ribosomal subunit. Forms a bridge to the 50S subunit in the 70S ribosome, contacting the 23S rRNA.

Functionally, one of the primary rRNA binding proteins, it binds directly to 16S rRNA where it helps nucleate assembly of the platform of the 30S subunit by binding and bridging several RNA helices of the 16S rRNA. In terms of biological role, forms an intersubunit bridge (bridge B4) with the 23S rRNA of the 50S subunit in the ribosome. This chain is Small ribosomal subunit protein uS15, found in Bdellovibrio bacteriovorus (strain ATCC 15356 / DSM 50701 / NCIMB 9529 / HD100).